Reading from the N-terminus, the 504-residue chain is Phosphoenolpyruvate carboxylase (504 aa).

Residues 1-16 (MTSRKIPSIMGTQHPD) show a composition bias toward polar residues. The disordered stretch occupies residues 1–21 (MTSRKIPSIMGTQHPDNANAP).

This sequence belongs to the PEPCase type 2 family. As to quaternary structure, homotetramer. Mg(2+) serves as cofactor.

It catalyses the reaction oxaloacetate + phosphate = phosphoenolpyruvate + hydrogencarbonate. Its function is as follows. Catalyzes the irreversible beta-carboxylation of phosphoenolpyruvate (PEP) to form oxaloacetate (OAA), a four-carbon dicarboxylic acid source for the tricarboxylic acid cycle. The protein is Phosphoenolpyruvate carboxylase of Leuconostoc mesenteroides subsp. mesenteroides (strain ATCC 8293 / DSM 20343 / BCRC 11652 / CCM 1803 / JCM 6124 / NCDO 523 / NBRC 100496 / NCIMB 8023 / NCTC 12954 / NRRL B-1118 / 37Y).